Here is a 296-residue protein sequence, read N- to C-terminus: Probable endonuclease 4 (296 aa).

Positions 68, 108, 145, 179, 182, 216, 229, 231, and 261 each coordinate Zn(2+).

This sequence belongs to the AP endonuclease 2 family. Requires Zn(2+) as cofactor.

The enzyme catalyses Endonucleolytic cleavage to 5'-phosphooligonucleotide end-products.. Endonuclease IV plays a role in DNA repair. It cleaves phosphodiester bonds at apurinic or apyrimidinic (AP) sites, generating a 3'-hydroxyl group and a 5'-terminal sugar phosphate. This chain is Probable endonuclease 4, found in Geobacter sulfurreducens (strain ATCC 51573 / DSM 12127 / PCA).